Here is a 71-residue protein sequence, read N- to C-terminus: UPF0346 protein SPG_0874 (71 aa).

The protein belongs to the UPF0346 family.

The polypeptide is UPF0346 protein SPG_0874 (Streptococcus pneumoniae serotype 19F (strain G54)).